Consider the following 296-residue polypeptide: MLLGSHVSMSGKKMLEGSAIEAHEYGETTFMIYTGAPQNTRRKSIEDLNITKGHEVMEKYGLSNIVVHAPYIINIANTTKPETFNLGVDFLQQEIERTQAIGAKDIVLHPGAHVGAGVDAGINKIIEGLNEVLTNDNNVRIALETMAGKGTEIGRSFEELARIIDGVHNNERLSVCFDTCHTHDAGYNVKEDFDGVLNEFDKIIGVDRIKVVHVNDSKNDRGAQKDRHENIGFGYIGFDALNYIVHHDSFKDIPKILETPYVGEDKKNKKPPYKLEIEMLKQQHFDPELKNKVMQQ.

The Zn(2+) site is built by His68, His109, Glu144, Asp178, His181, His213, Asp226, His228, and Glu258.

The protein belongs to the AP endonuclease 2 family. Requires Zn(2+) as cofactor.

The catalysed reaction is Endonucleolytic cleavage to 5'-phosphooligonucleotide end-products.. In terms of biological role, endonuclease IV plays a role in DNA repair. It cleaves phosphodiester bonds at apurinic or apyrimidinic (AP) sites, generating a 3'-hydroxyl group and a 5'-terminal sugar phosphate. This chain is Probable endonuclease 4, found in Staphylococcus aureus (strain MRSA252).